The following is a 435-amino-acid chain: Mitochondrial distribution and morphology protein 12 (435 aa).

The SMP-LTD domain maps to 1 to 435 (MSIEVDWGAA…VYPSFWTFLV (435 aa)). 2 disordered regions span residues 73–113 (DEDD…AINH) and 186–268 (WNDS…TSEE). Positions 96-113 (THPELNESSFRDDNAINH) are enriched in basic and acidic residues. Positions 218–238 (SSNPTSRPSTSSTLPSHPSGS) are enriched in low complexity. Positions 251-268 (HGSHPEEHGHLDDPTSEE) are enriched in basic and acidic residues.

It belongs to the MDM12 family. As to quaternary structure, component of the ER-mitochondria encounter structure (ERMES) or MDM complex, composed of mmm1, mdm10, mdm12 and mdm34. A mmm1 homodimer associates with one molecule of mdm12 on each side in a pairwise head-to-tail manner, and the SMP-LTD domains of mmm1 and mdm12 generate a continuous hydrophobic tunnel for phospholipid trafficking.

The protein resides in the mitochondrion outer membrane. Its subcellular location is the endoplasmic reticulum membrane. In terms of biological role, component of the ERMES/MDM complex, which serves as a molecular tether to connect the endoplasmic reticulum (ER) and mitochondria. Components of this complex are involved in the control of mitochondrial shape and protein biogenesis, and function in nonvesicular lipid trafficking between the ER and mitochondria. Mdm12 is required for the interaction of the ER-resident membrane protein mmm1 and the outer mitochondrial membrane-resident beta-barrel protein mdm10. The mdm12-mmm1 subcomplex functions in the major beta-barrel assembly pathway that is responsible for biogenesis of all mitochondrial outer membrane beta-barrel proteins, and acts in a late step after the SAM complex. The mdm10-mdm12-mmm1 subcomplex further acts in the TOM40-specific pathway after the action of the mdm12-mmm1 complex. Essential for establishing and maintaining the structure of mitochondria and maintenance of mtDNA nucleoids. In Aspergillus niger (strain ATCC MYA-4892 / CBS 513.88 / FGSC A1513), this protein is Mitochondrial distribution and morphology protein 12.